A 372-amino-acid polypeptide reads, in one-letter code: N-methyl-L-tryptophan oxidase (372 aa).

Aspartate 4–histidine 34 serves as a coordination point for FAD. Cysteine 308 carries the S-8alpha-FAD cysteine modification.

This sequence belongs to the MSOX/MTOX family. MTOX subfamily. Monomer. It depends on FAD as a cofactor.

It catalyses the reaction N(alpha)-methyl-L-tryptophan + O2 + H2O = L-tryptophan + formaldehyde + H2O2. Its function is as follows. Catalyzes the oxidative demethylation of N-methyl-L-tryptophan. The chain is N-methyl-L-tryptophan oxidase from Escherichia coli O17:K52:H18 (strain UMN026 / ExPEC).